The sequence spans 506 residues: Histidine--tRNA ligase, mitochondrial (506 aa).

The N-terminal 33 residues, 1 to 33, are a transit peptide targeting the mitochondrion; sequence MHLLGLLPRRAWASLLSQLLRPPWASCTGAVRC. Position 67 is a phosphoserine (S67). L-histidine-binding positions include 131 to 133, R158, Q174, D178, R327, and 331 to 332; these read DLT and YY. Residue K444 is modified to N6-acetyllysine.

It belongs to the class-II aminoacyl-tRNA synthetase family. Homodimer.

It is found in the mitochondrion. The catalysed reaction is tRNA(His) + L-histidine + ATP = L-histidyl-tRNA(His) + AMP + diphosphate + H(+). Its function is as follows. Mitochondrial aminoacyl-tRNA synthetase that catalyzes the ATP-dependent ligation of histidine to the 3'-end of its cognate tRNA, via the formation of an aminoacyl-adenylate intermediate (His-AMP). The polypeptide is Histidine--tRNA ligase, mitochondrial (HARS2) (Pongo abelii (Sumatran orangutan)).